The chain runs to 147 residues: Large ribosomal subunit protein uL15 (147 aa).

It belongs to the universal ribosomal protein uL15 family. As to quaternary structure, part of the 50S ribosomal subunit.

Its function is as follows. Binds to the 23S rRNA. The protein is Large ribosomal subunit protein uL15 of Blochmanniella floridana.